Reading from the N-terminus, the 149-residue chain is D-aminoacyl-tRNA deacylase (149 aa).

Positions 137–138 match the Gly-cisPro motif, important for rejection of L-amino acids motif; it reads GP.

It belongs to the DTD family. Homodimer.

The protein localises to the cytoplasm. It carries out the reaction glycyl-tRNA(Ala) + H2O = tRNA(Ala) + glycine + H(+). The catalysed reaction is a D-aminoacyl-tRNA + H2O = a tRNA + a D-alpha-amino acid + H(+). Its function is as follows. An aminoacyl-tRNA editing enzyme that deacylates mischarged D-aminoacyl-tRNAs. Also deacylates mischarged glycyl-tRNA(Ala), protecting cells against glycine mischarging by AlaRS. Acts via tRNA-based rather than protein-based catalysis; rejects L-amino acids rather than detecting D-amino acids in the active site. By recycling D-aminoacyl-tRNA to D-amino acids and free tRNA molecules, this enzyme counteracts the toxicity associated with the formation of D-aminoacyl-tRNA entities in vivo and helps enforce protein L-homochirality. This Clostridium botulinum (strain Loch Maree / Type A3) protein is D-aminoacyl-tRNA deacylase.